A 122-amino-acid polypeptide reads, in one-letter code: Large ribosomal subunit protein uL14 (122 aa).

Belongs to the universal ribosomal protein uL14 family. Part of the 50S ribosomal subunit. Forms a cluster with proteins L3 and L19. In the 70S ribosome, L14 and L19 interact and together make contacts with the 16S rRNA in bridges B5 and B8.

Functionally, binds to 23S rRNA. Forms part of two intersubunit bridges in the 70S ribosome. This Rhodococcus erythropolis (strain PR4 / NBRC 100887) protein is Large ribosomal subunit protein uL14.